The sequence spans 189 residues: Peptidyl-tRNA hydrolase (189 aa).

Y15 provides a ligand contact to tRNA. The active-site Proton acceptor is the H20. The tRNA site is built by F66, N68, and N114.

The protein belongs to the PTH family. In terms of assembly, monomer.

The protein resides in the cytoplasm. It catalyses the reaction an N-acyl-L-alpha-aminoacyl-tRNA + H2O = an N-acyl-L-amino acid + a tRNA + H(+). Its function is as follows. Hydrolyzes ribosome-free peptidyl-tRNAs (with 1 or more amino acids incorporated), which drop off the ribosome during protein synthesis, or as a result of ribosome stalling. Catalyzes the release of premature peptidyl moieties from peptidyl-tRNA molecules trapped in stalled 50S ribosomal subunits, and thus maintains levels of free tRNAs and 50S ribosomes. This chain is Peptidyl-tRNA hydrolase, found in Streptococcus sanguinis (strain SK36).